The chain runs to 520 residues: 4-hydroxyphenylacetate 3-monooxygenase oxygenase component (520 aa).

FAD-binding positions include 155–157 and T196; that span reads HAI.

This sequence belongs to the FADH(2)-utilizing monooxygenase family. Homodimer. HPA 3-hydroxylase consists of a reductase component HpaC and an oxygenase component HpaB. Some form of interactions between the reductase and the oxygenase facilitate the transfer of FADH(-) to the oxygenase in P.aeruginosa, although interactions are not required in other species.

The catalysed reaction is 4-hydroxyphenylacetate + FADH2 + O2 = 3,4-dihydroxyphenylacetate + FAD + H2O + H(+). The protein operates within aromatic compound metabolism; 4-hydroxyphenylacetate degradation; pyruvate and succinate semialdehyde from 4-hydroxyphenylacetate: step 1/7. Oxygenase component of the 4-hydroxyphenylacetate (HPA) 3-hydroxylase. Catalyzes the hydroxylation of 4-hydroxyphenylacetate to form 3,4-dihydroxyphenylacetate, using FADH(-) provided by the reductase component HpaC to activate oxygen. To a lesser extent, can also use reduced FMN. In vitro, has hydroxylation activity toward tyrosol and various cinnamic acid derivatives, catalyzing the hydroxylation of p-coumaric acid, caffeic acid, ferulic acid, and coniferaldehyde. The polypeptide is 4-hydroxyphenylacetate 3-monooxygenase oxygenase component (Pseudomonas aeruginosa (strain ATCC 15692 / DSM 22644 / CIP 104116 / JCM 14847 / LMG 12228 / 1C / PRS 101 / PAO1)).